The chain runs to 331 residues: Ketol-acid reductoisomerase (NADP(+)) (331 aa).

In terms of domain architecture, KARI N-terminal Rossmann spans 2–182 (AQLFYDSDAD…GGTRAGILET (181 aa)). Residues 25–28 (YGSQ), Ser-51, Ser-53, and 83–86 (DEFQ) contribute to the NADP(+) site. His-108 is a catalytic residue. Gly-134 provides a ligand contact to NADP(+). The KARI C-terminal knotted domain maps to 183–328 (NFKEETETDL…KGLRSMFSWL (146 aa)). Mg(2+)-binding residues include Asp-191, Glu-195, Glu-227, and Glu-231. Residue Ser-252 participates in substrate binding.

It belongs to the ketol-acid reductoisomerase family. Mg(2+) is required as a cofactor.

It catalyses the reaction (2R)-2,3-dihydroxy-3-methylbutanoate + NADP(+) = (2S)-2-acetolactate + NADPH + H(+). The catalysed reaction is (2R,3R)-2,3-dihydroxy-3-methylpentanoate + NADP(+) = (S)-2-ethyl-2-hydroxy-3-oxobutanoate + NADPH + H(+). The protein operates within amino-acid biosynthesis; L-isoleucine biosynthesis; L-isoleucine from 2-oxobutanoate: step 2/4. Its pathway is amino-acid biosynthesis; L-valine biosynthesis; L-valine from pyruvate: step 2/4. Functionally, involved in the biosynthesis of branched-chain amino acids (BCAA). Catalyzes an alkyl-migration followed by a ketol-acid reduction of (S)-2-acetolactate (S2AL) to yield (R)-2,3-dihydroxy-isovalerate. In the isomerase reaction, S2AL is rearranged via a Mg-dependent methyl migration to produce 3-hydroxy-3-methyl-2-ketobutyrate (HMKB). In the reductase reaction, this 2-ketoacid undergoes a metal-dependent reduction by NADPH to yield (R)-2,3-dihydroxy-isovalerate. The sequence is that of Ketol-acid reductoisomerase (NADP(+)) from Synechococcus sp. (strain CC9605).